The primary structure comprises 291 residues: Phosphatidylcholine-sterol acyltransferase (291 aa).

Asparagine 28 carries an N-linked (GlcNAc...) asparagine glycan. The active-site Nucleophile is serine 125. Asparagine 179 carries an N-linked (GlcNAc...) asparagine glycan. Cysteine 220 and cysteine 263 are disulfide-bonded. Aspartate 252 (charge relay system) is an active-site residue. Asparagine 280 carries an N-linked (GlcNAc...) asparagine glycan.

It belongs to the AB hydrolase superfamily. Lipase family.

The protein localises to the secreted. It catalyses the reaction a sterol + a 1,2-diacyl-sn-glycero-3-phosphocholine = a sterol ester + a 1-acyl-sn-glycero-3-phosphocholine. APOA1 is the most potent activator in plasma. Also activated by APOE, APOC1 and APOA4. Central enzyme in the extracellular metabolism of plasma lipoproteins. Synthesized mainly in the liver and secreted into plasma where it converts cholesterol and phosphatidylcholines (lecithins) to cholesteryl esters and lysophosphatidylcholines on the surface of high and low density lipoproteins (HDLs and LDLs). The cholesterol ester is then transported back to the liver. Has a preference for plasma 16:0-18:2 or 18:O-18:2 phosphatidylcholines. Also produced in the brain by primary astrocytes, and esterifies free cholesterol on nascent APOE-containing lipoproteins secreted from glia and influences cerebral spinal fluid (CSF) APOE- and APOA1 levels. Together with APOE and the cholesterol transporter ABCA1, plays a key role in the maturation of glial-derived, nascent lipoproteins. Required for remodeling high-density lipoprotein particles into their spherical forms. This Myodes glareolus (Bank vole) protein is Phosphatidylcholine-sterol acyltransferase (LCAT).